A 147-amino-acid polypeptide reads, in one-letter code: Large ribosomal subunit protein uL16 (147 aa).

It belongs to the universal ribosomal protein uL16 family. In terms of assembly, part of the 50S ribosomal subunit.

In terms of biological role, binds 23S rRNA and is also seen to make contacts with the A and possibly P site tRNAs. The sequence is that of Large ribosomal subunit protein uL16 from Caldicellulosiruptor bescii (strain ATCC BAA-1888 / DSM 6725 / KCTC 15123 / Z-1320) (Anaerocellum thermophilum).